The primary structure comprises 388 residues: Flap endonuclease 1 (388 aa).

The segment at 1–105 is N-domain; sequence MGIKNLTSLI…GELAKRYARR (105 aa). A Mg(2+)-binding site is contributed by D34. R71 provides a ligand contact to DNA. Residues D87, E159, E161, D180, and D182 each coordinate Mg(2+). The interval 123 to 254 is I-domain; it reads DVQKFQKRTI…KKSFDMITKH (132 aa). E159 contributes to the DNA binding site. DNA-binding residues include G232 and D234. D234 contributes to the Mg(2+) binding site. The interval 338–346 is interaction with PCNA; sequence VQTRIDTFF. A disordered region spans residues 349–388; that stretch reads IKRPRDEDAGSAKKKQKTVAKPGAAGSKKKPAAKKAAGKK. A compositionally biased stretch (basic residues) spans 375–388; that stretch reads SKKKPAAKKAAGKK.

It belongs to the XPG/RAD2 endonuclease family. FEN1 subfamily. As to quaternary structure, interacts with PCNA. Three molecules of repG bind to one PCNA trimer with each molecule binding to one PCNA monomer. PCNA stimulates the nuclease activity without altering cleavage specificity. Mg(2+) serves as cofactor. In terms of processing, phosphorylated. Phosphorylation upon DNA damage induces relocalization to the nuclear plasma.

It is found in the nucleus. The protein localises to the nucleolus. The protein resides in the nucleoplasm. Its subcellular location is the mitochondrion. Structure-specific nuclease with 5'-flap endonuclease and 5'-3' exonuclease activities involved in DNA replication and repair. During DNA replication, cleaves the 5'-overhanging flap structure that is generated by displacement synthesis when DNA polymerase encounters the 5'-end of a downstream Okazaki fragment. It enters the flap from the 5'-end and then tracks to cleave the flap base, leaving a nick for ligation. Also involved in the long patch base excision repair (LP-BER) pathway, by cleaving within the apurinic/apyrimidinic (AP) site-terminated flap. Acts as a genome stabilization factor that prevents flaps from equilibrating into structures that lead to duplications and deletions. Also possesses 5'-3' exonuclease activity on nicked or gapped double-stranded DNA, and exhibits RNase H activity. Also involved in replication and repair of rDNA and in repairing mitochondrial DNA. This chain is Flap endonuclease 1, found in Heterostelium pallidum (strain ATCC 26659 / Pp 5 / PN500) (Cellular slime mold).